The primary structure comprises 126 residues: Nitrogenase-stabilizing/protective protein NifW (126 aa).

The segment at 104 to 126 is disordered; sequence VPMSEITVERPATTQTDEKGQQR.

The protein belongs to the NifW family. Homotrimer; associates with NifD.

In terms of biological role, may protect the nitrogenase Fe-Mo protein from oxidative damage. The chain is Nitrogenase-stabilizing/protective protein NifW from Parafrankia sp. (strain EAN1pec).